Consider the following 198-residue polypeptide: MSMYMPGATAVGITFDGGVVFASEKRIAFGNFLVSKTTKKTFPITPKVGATCAGLVADMQILSLQIAALAKIRKMELKRDVPPNTVAKMMSNMMYERRYFPLLTQVIVGGVVDKPIMYTLDPLGSVLPDEYAAVGTGAEMALGVLDPQFKPNMTKDEAIDLAKRAVRAASLRDSASGDGVDVLVITKDGTEEFTEEIK.

The propeptide at 1–8 (MSMYMPGA) is removed in mature form; by autocatalysis. The active-site Nucleophile is T9.

It belongs to the peptidase T1B family. In terms of assembly, the 20S proteasome core is composed of 14 alpha and 14 beta subunits that assemble into four stacked heptameric rings, resulting in a barrel-shaped structure. The two inner rings, each composed of seven catalytic beta subunits, are sandwiched by two outer rings, each composed of seven alpha subunits. The catalytic chamber with the active sites is on the inside of the barrel. Has a gated structure, the ends of the cylinder being occluded by the N-termini of the alpha-subunits. Is capped at one or both ends by the proteasome regulatory ATPase, PAN.

The protein localises to the cytoplasm. It catalyses the reaction Cleavage of peptide bonds with very broad specificity.. With respect to regulation, the formation of the proteasomal ATPase PAN-20S proteasome complex, via the docking of the C-termini of PAN into the intersubunit pockets in the alpha-rings, triggers opening of the gate for substrate entry. Interconversion between the open-gate and close-gate conformations leads to a dynamic regulation of the 20S proteasome proteolysis activity. In terms of biological role, component of the proteasome core, a large protease complex with broad specificity involved in protein degradation. This chain is Proteasome subunit beta 1, found in Nitrosopumilus maritimus (strain SCM1).